A 1126-amino-acid chain; its full sequence is NUT family member 1 (1126 aa).

7 disordered regions span residues 1 to 56 (MASD…PVFS), 334 to 367 (IPKKAASKTRAPRRRQRKPQRPPVPEAPKEIPPE), 475 to 515 (EDAQ…QGAA), 537 to 559 (QEQTLGGPAGIHKDGNNLPSPSS), 664 to 692 (AGMLTRGREPPSVVSQKGSSRAVRGDDRG), 755 to 810 (ALNS…GPGL), and 932 to 1014 (GEGR…EELS). The span at 30 to 55 (FAPPPPVPPDQPLWEPSPQPPIPPVF) shows a compositional bias: pro residues. Residues 338–353 (AASKTRAPRRRQRKPQ) are compositionally biased toward basic residues. A compositionally biased stretch (polar residues) spans 962-975 (KLTNGQGQGSTSPR). Residue S973 is modified to Phosphoserine. Basic and acidic residues predominate over residues 987–1005 (TPIKEKCTSADRAKRRETE). Phosphoserine is present on residues S1022, S1025, and S1027. Residues 1032 to 1126 (PLSTRQASGG…SKRKKRRRSQ (95 aa)) are disordered. An N5-methylglutamine modification is found at Q1042. The segment covering 1106–1126 (PRKRRRDGFVTSKRKKRRRSQ) has biased composition (basic residues).

This sequence belongs to the NUT family. Methylated at Gln-1042 by N6AMT1. Post-translationally, phosphorylation on Ser-1022, Ser-1025 or Ser-1027 is important for cytoplasmic export.

The protein localises to the cytoplasm. The protein resides in the nucleus. In terms of biological role, plays a role in the regulation of proliferation. Regulates TERT expression by modulating SP1 binding to TERT promoter binding sites. In Mus musculus (Mouse), this protein is NUT family member 1.